The following is a 383-amino-acid chain: MRFLTAGESHGPELLAIIEGLPAGLPLSEEDINPWLEKRQKGYGRGRRMVIERDRVEFRAGVRGGRTTGAPVALAIKNADFKNWAEIMDPAPGNWPRKRALTAARPGHADLAGGMKYGHKDLRDVLERASARETAMRVAVGAVALKLLSLLGVEGVGYVPGMAGVWAKVPFSWDLVPRIEESPLRMTDPEAEAEAIRRIDQAKAEGDTLGGIIEARFRGLVPGLGSHVHWDRKLDGRLAQMALSIPAVKGVEIGPAFENAMKRGSEVHDAIYWSPERGFYRKTNRAGGLEGGMTTGEELVVRAALKPIATLMKPLPTVDVVTHEPKDAARERSDTTAVPAASVILCALSAIVLAQAYLEKFGGDTMEEIQERVERYRERVRAY.

NADP(+) contacts are provided by Arg39 and Arg45. Residues 128–130, Gly291, 306–310, and Arg332 each bind FMN; these read RAS and KPIAT.

Belongs to the chorismate synthase family. In terms of assembly, homotetramer. FMNH2 serves as cofactor.

It carries out the reaction 5-O-(1-carboxyvinyl)-3-phosphoshikimate = chorismate + phosphate. The protein operates within metabolic intermediate biosynthesis; chorismate biosynthesis; chorismate from D-erythrose 4-phosphate and phosphoenolpyruvate: step 7/7. Functionally, catalyzes the anti-1,4-elimination of the C-3 phosphate and the C-6 proR hydrogen from 5-enolpyruvylshikimate-3-phosphate (EPSP) to yield chorismate, which is the branch point compound that serves as the starting substrate for the three terminal pathways of aromatic amino acid biosynthesis. This reaction introduces a second double bond into the aromatic ring system. The protein is Chorismate synthase of Thermus thermophilus (strain ATCC 27634 / DSM 579 / HB8).